The following is a 375-amino-acid chain: Trichodiene synthase (375 aa).

Belongs to the trichodiene synthase family.

It catalyses the reaction (2E,6E)-farnesyl diphosphate = trichodiene + diphosphate. It functions in the pathway sesquiterpene biosynthesis; trichothecene biosynthesis. Functionally, TS is a member of the terpene cyclase group of enzymes. It catalyzes the isomerization and cyclization of farnesyl pyro-phosphate to form trichodiene, the first cyclic intermediate in the biosynthetic pathway for trichothecenes. It serves to branch trichothecene biosynthesis from the isoprenoid pathway. This Fusarium cerealis (Fusarium crookwellense) protein is Trichodiene synthase (TRI5).